Consider the following 207-residue polypeptide: MSTTTPNIWIAASDGKTDVVLKHLDSGISPNAADENGYTPIHAAVSYGHSDLLKILVERGGDINIRDQDGETPLFVCEKLEIAHDLINQYNADTTVKNNDGLIAAQVIEANGEFPELAKYLYSFTDLEPKDVNTLPNDTKIEYAKLMTEQEMDEEAGQPLLDQKAKAEIDRILALRDTGVNVDDELRKILTGALSGHFERNVRPRSN.

ANK repeat units lie at residues 36 to 65 (NGYT…DINI) and 69 to 98 (DGET…TVKN).

Its subcellular location is the cytoplasm. It is found in the nucleus. The polypeptide is Ankyrin repeat-containing protein P1E11.10 (Schizosaccharomyces pombe (strain 972 / ATCC 24843) (Fission yeast)).